A 331-amino-acid polypeptide reads, in one-letter code: Probable allantoicase (331 aa).

The protein belongs to the allantoicase family.

The enzyme catalyses allantoate + H2O = (S)-ureidoglycolate + urea. It functions in the pathway nitrogen metabolism; (S)-allantoin degradation; (S)-ureidoglycolate from allantoate (aminidohydrolase route): step 1/1. This is Probable allantoicase from Pseudomonas fluorescens (strain Pf0-1).